A 101-amino-acid polypeptide reads, in one-letter code: MAKKSMMNRDIKRTKIVKKYKAKRLELKKIIKSINVSDEERFQATIKLQALPRNASPTRQRSRCSLTGRPHGFYRKFGLARNKLRECTMNGEVPGLSKASW.

Belongs to the universal ribosomal protein uS14 family. In terms of assembly, part of the 30S ribosomal subunit. Contacts proteins S3 and S10.

Functionally, binds 16S rRNA, required for the assembly of 30S particles and may also be responsible for determining the conformation of the 16S rRNA at the A site. The polypeptide is Small ribosomal subunit protein uS14 (Vesicomyosocius okutanii subsp. Calyptogena okutanii (strain HA)).